A 531-amino-acid chain; its full sequence is Phosphoinositide phospholipase C 9 (531 aa).

Positions 107–253 constitute a PI-PLC X-box domain; that stretch reads RDMNAPLSHY…LQNKILISRR (147 aa). Residues 265–385 enclose the PI-PLC Y-box domain; the sequence is ENGVELEIQE…GYVKKPNFLL (121 aa). Ser276 is modified (phosphoserine). A C2 domain is found at 386-513; the sequence is NAGSSGVFYP…EGIRAVPLYD (128 aa).

The cofactor is Ca(2+). In terms of tissue distribution, expressed in leaves, roots, flowers and siliques.

Its subcellular location is the cell membrane. It catalyses the reaction a 1,2-diacyl-sn-glycero-3-phospho-(1D-myo-inositol-4,5-bisphosphate) + H2O = 1D-myo-inositol 1,4,5-trisphosphate + a 1,2-diacyl-sn-glycerol + H(+). Functionally, the production of the second messenger molecules diacylglycerol (DAG) and inositol 1,4,5-trisphosphate (IP3) is mediated by activated phosphatidylinositol-specific phospholipase C enzymes. This chain is Phosphoinositide phospholipase C 9 (PLC9), found in Arabidopsis thaliana (Mouse-ear cress).